We begin with the raw amino-acid sequence, 242 residues long: Spiralin (242 aa).

The signal sequence occupies residues 1-23 (MKKLLSILAVFGVSAVGTTSVVA). Residue C24 is the site of N-palmitoyl cysteine attachment. Residue C24 is the site of S-diacylglycerol cysteine attachment.

This sequence belongs to the spiralin family. In terms of assembly, seems to occur as dimer, tetramers, and large oligomers of identical chains. In terms of processing, palmitate and stearate are the major lipid components.

It is found in the cell membrane. Major membrane protein of spiroplasma. This chain is Spiralin (spi), found in Spiroplasma melliferum.